Consider the following 181-residue polypeptide: 6,7-dimethyl-8-ribityllumazine synthase (181 aa).

Residues Tyr-30, 61–63, and 87–89 contribute to the 5-amino-6-(D-ribitylamino)uracil site; these read ALE and CII. Residue 92–93 coordinates (2S)-2-hydroxy-3-oxobutyl phosphate; that stretch reads ET. His-95 serves as the catalytic Proton donor. Asn-120 serves as a coordination point for 5-amino-6-(D-ribitylamino)uracil. A (2S)-2-hydroxy-3-oxobutyl phosphate-binding site is contributed by Arg-134.

This sequence belongs to the DMRL synthase family.

The enzyme catalyses (2S)-2-hydroxy-3-oxobutyl phosphate + 5-amino-6-(D-ribitylamino)uracil = 6,7-dimethyl-8-(1-D-ribityl)lumazine + phosphate + 2 H2O + H(+). Its pathway is cofactor biosynthesis; riboflavin biosynthesis; riboflavin from 2-hydroxy-3-oxobutyl phosphate and 5-amino-6-(D-ribitylamino)uracil: step 1/2. In terms of biological role, catalyzes the formation of 6,7-dimethyl-8-ribityllumazine by condensation of 5-amino-6-(D-ribitylamino)uracil with 3,4-dihydroxy-2-butanone 4-phosphate. This is the penultimate step in the biosynthesis of riboflavin. The polypeptide is 6,7-dimethyl-8-ribityllumazine synthase (Beijerinckia indica subsp. indica (strain ATCC 9039 / DSM 1715 / NCIMB 8712)).